The following is a 295-amino-acid chain: MADIIDIANPTRTQAILNQYGLHAKKKFGQNFLTDLNVLHGIVDVAGITSEDYVIEIGPGIGALTEQLARSAKKVVAFEIDPHMVAVLAETLLPYDNVKVIENDILKVNLAHVIATEFGEGAHVKIVANLPYYITTPILMQLLRAKISWDNIVVMMQREVADRLNAEIGTKAYGVLTLTIQYYAQAQLAIKVPASAFNPSPNVDSAVVMLTPIVPETVVDNPDKLFSVVKGSFAHRRKSLWNNMLQMFGKQEDVKQRIQDALDSVNIASSIRAERLSLNQLTALYEALKLQGLIK.

S-adenosyl-L-methionine contacts are provided by Asn-31, Leu-33, Gly-58, Glu-79, Asp-104, and Asn-129.

Belongs to the class I-like SAM-binding methyltransferase superfamily. rRNA adenine N(6)-methyltransferase family. RsmA subfamily.

It localises to the cytoplasm. The catalysed reaction is adenosine(1518)/adenosine(1519) in 16S rRNA + 4 S-adenosyl-L-methionine = N(6)-dimethyladenosine(1518)/N(6)-dimethyladenosine(1519) in 16S rRNA + 4 S-adenosyl-L-homocysteine + 4 H(+). Specifically dimethylates two adjacent adenosines (A1518 and A1519) in the loop of a conserved hairpin near the 3'-end of 16S rRNA in the 30S particle. May play a critical role in biogenesis of 30S subunits. In Leuconostoc citreum (strain KM20), this protein is Ribosomal RNA small subunit methyltransferase A.